We begin with the raw amino-acid sequence, 162 residues long: Protein NrdI (162 aa).

The protein belongs to the NrdI family.

Functionally, probably involved in ribonucleotide reductase function. In Streptococcus pyogenes serotype M28 (strain MGAS6180), this protein is Protein NrdI.